A 285-amino-acid polypeptide reads, in one-letter code: Sulfotransferase 2A1 (285 aa).

Lysine 44, serine 45, glycine 46, threonine 47, asparagine 48, and tryptophan 49 together coordinate 3'-phosphoadenylyl sulfate. Histidine 99 (proton acceptor) is an active-site residue. The 3'-phosphoadenylyl sulfate site is built by arginine 121, serine 129, tyrosine 184, serine 218, methionine 223, arginine 247, lysine 248, and glycine 249. Serine 251 bears the Phosphoserine mark.

This sequence belongs to the sulfotransferase 1 family. Homodimer. Post-translationally, the N-terminus is blocked. In terms of tissue distribution, liver, adrenal and at lower level in the kidney. Is present in human fetus in higher level in the adrenal than the liver and the kidney.

The protein resides in the cytoplasm. The catalysed reaction is an alcohol + 3'-phosphoadenylyl sulfate = an alkyl sulfate + adenosine 3',5'-bisphosphate + H(+). It carries out the reaction (24S)-hydroxycholesterol + 3'-phosphoadenylyl sulfate = (24S)-hydroxycholesterol 24-sulfate + adenosine 3',5'-bisphosphate + H(+). The enzyme catalyses (24S)-hydroxycholesterol + 3'-phosphoadenylyl sulfate = (24S)-hydroxycholesterol 3-sulfate + adenosine 3',5'-bisphosphate + H(+). It catalyses the reaction (24S)-hydroxycholesterol 24-sulfate + 3'-phosphoadenylyl sulfate = (24S)-hydroxycholesterol 3,24-disulfate + adenosine 3',5'-bisphosphate + H(+). The catalysed reaction is 3beta-hydroxyandrost-5-en-17-one + 3'-phosphoadenylyl sulfate = dehydroepiandrosterone 3-sulfate + adenosine 3',5'-bisphosphate + H(+). It carries out the reaction pregnenolone + 3'-phosphoadenylyl sulfate = pregnenolone sulfate + adenosine 3',5'-bisphosphate + H(+). The enzyme catalyses androsterone + 3'-phosphoadenylyl sulfate = androsterone 3alpha-sulfate + adenosine 3',5'-bisphosphate + H(+). It catalyses the reaction taurolithocholate + 3'-phosphoadenylyl sulfate = taurolithocholate 3-sulfate + adenosine 3',5'-bisphosphate + H(+). The catalysed reaction is lithocholate + 3'-phosphoadenylyl sulfate = lithocholate sulfate + adenosine 3',5'-bisphosphate + H(+). With respect to regulation, subject to substrate inhibition. Alternate orientations for binding of steroid substrates to SULT2A1 may play a role in substrate inhibition. Functionally, sulfotransferase that utilizes 3'-phospho-5'-adenylyl sulfate (PAPS) as sulfonate donor to catalyze the sulfonation of steroids and bile acids in the liver and adrenal glands. Mediates the sulfation of a wide range of steroids and sterols, including pregnenolone, androsterone, DHEA, bile acids, cholesterol and as well many xenobiotics that contain alcohol and phenol functional groups. Sulfonation increases the water solubility of most compounds, and therefore their renal excretion, but it can also result in bioactivation to form active metabolites. Plays an important role in maintening steroid and lipid homeostasis. Plays a key role in bile acid metabolism. In addition, catalyzes the metabolic activation of potent carcinogenic polycyclic arylmethanols. The polypeptide is Sulfotransferase 2A1 (SULT2A1) (Homo sapiens (Human)).